Consider the following 271-residue polypeptide: Short chain dehydrogenase virK (271 aa).

NADP(+)-binding residues include leucine 13, aspartate 59, asparagine 87, tyrosine 168, lysine 172, valine 201, and threonine 203. Residue tyrosine 168 is the Proton donor of the active site. The active-site Lowers pKa of active site Tyr is lysine 172.

The protein belongs to the short-chain dehydrogenases/reductases (SDR) family.

The protein operates within secondary metabolite biosynthesis. Functionally, short chain dehydrogenase; part of the gene cluster that mediates the biosynthesis of virensols and trichoxide, fungal natural products that contain or are derived from a salicylaldehyde core. The pathway begins with the synthesis of the reduced chain in virensol C by the highly reducing polyketide synthase virA via condensation of one acetate and 8 malonate units. VirA has interesting programming rules since the first 2 ketides are fully reduced, the 3 following ketides undergo beta-dehydration, and the last 3 ketides are only reduced to beta-hydroxys to yield the trihydroxy portion. The production of aldehyde virensol C by virA alone is surprising, since virA does not contain a reductase (R) domain that is typically associated with reductive product release in HRPKS. The cupin-domain enzyme virC is involved in enhancing virA product turnover. The short-chain dehydrogenase virB then oxidizes the C-7 alcohol of virensol C to a ketone, yielding virensol D. Virensol D is further transformed to salicylaldehyde 5-deoxyaurocitrin by the short-chain dehydrogenase virD. VirD catalyzes the dehydrogenation of C-3 to form the beta-ketone aldehyde, which is followed by the generation of the nucleophilic C-2 that is required for the intramolecular aldol condensation between C-2 and C-7, itself followed by dehydration and aromatization which leads to salicylaldehyde 5-deoxyaurocitrin. While the dehydrogenation of virensol D is definitely catalyzed by virD, the aldol condensation and dehydration may be uncatalyzed or assisted by virD. The short chain dehydrogenase virG then converts salicylaldehyde 5-deoxyaurocitrin into virensol B which is further hydroxylated by the cytochrome P450 monooxygenase virE to yield the hydroquinone virensol A. VirI then may oxidize virensol A to form the quinone, while virH performs the epoxidation. Finally, the two remaining short-chain dehydrogenases, virK and virL, are probably responsible for reducing the ketones to the corresponding alcohols to furnish the epoxycyclohexanol structure in trichoxide. This is Short chain dehydrogenase virK from Hypocrea virens (strain Gv29-8 / FGSC 10586) (Gliocladium virens).